Here is a 750-residue protein sequence, read N- to C-terminus: Cellulose synthase-like protein H1 (750 aa).

The next 2 membrane-spanning stretches (helical) occupy residues 27–47 (LAILFLLLALLLHRVLHDSGA) and 52–72 (AALACEAWFTFMWLLNVNAKW). Active-site residues include D137 and D459. The next 6 membrane-spanning stretches (helical) occupy residues 537 to 557 (VWPVRAPFELCYALLGPYCLL), 570 to 590 (GFYIALALFIAYNTYMFMEFI), 608 to 628 (ITSASAWLLAFLTVILKTLGF), 664 to 684 (VFIPVTALAMLSVIAIAVGAW), 697 to 717 (GPGISEFISCGWLVLCFMPLL), and 727 to 747 (GIPWSIKMKACLLVAIFLLFC).

This sequence belongs to the glycosyltransferase 2 family. Plant cellulose synthase-like H subfamily.

Its subcellular location is the golgi apparatus membrane. Functionally, thought to be a Golgi-localized beta-glycan synthase that polymerize the backbones of noncellulosic polysaccharides (hemicelluloses) of plant cell wall. This is Cellulose synthase-like protein H1 (CSLH1) from Oryza sativa subsp. japonica (Rice).